A 490-amino-acid polypeptide reads, in one-letter code: Cytochrome P450 monooxygenase anuE (490 aa).

Cysteine 405 contributes to the heme binding site.

This sequence belongs to the cytochrome P450 family. Requires heme as cofactor.

It carries out the reaction 2-hydroxymethyl-3-pentylphenol + reduced [NADPH--hemoprotein reductase] + O2 = (8S)-annullatin E + oxidized [NADPH--hemoprotein reductase] + H2O + H(+). Its pathway is secondary metabolite biosynthesis. Cytochrome P450 monooxygenase; part of the gene cluster that mediates the biosynthesis of annullatin D, an alkylated aromatic polyketide with a fused dihydrobenzofuran lactone ring system that exhibits potent agonistic activities toward the cannabinoid receptors. Within the pathway, anuE catalyzes the hydroxylation of 2-hydroxymethyl-3-pentylphenol at the side chain to produce (8S)-annullatin E. The annullatin backbone 2-hydroxymethyl-3-pentylphenol is assembled from one acetyl-CoA starter unit and 5 malonyl-CoA elongation units by cooperation of the highly reducing polyketide synthase anuA, the short-chain dehydrogenase anuB and the oxidoreductase anuC, before being hydroxylated at the C-5 alkyl chain by the cytochrome P450 monooxygenase anuE to form (8S)-annullatin E. The prenyltransferase anuH subsequently installs one isoprenyl group at the benzene ring to form (8S)-annullatin J. Enzymatic or nonenzymatic dihydro-benzofuran ring formation between the prenyl and the phenolic hydroxyl groups in (8S)-annullatin J results in two diastereomers (2S,9S)-annullatin H and compound 12. The intermediate (2S,9S)-annullatin H is then converted to (2S,9S)-annullatin D by the FAD-linked oxidoreductase anuG-catalyzed five-member lactone ring formation. The isomer 12 acts as a substrate for the short-chain dehydrogenase anuF and is oxidized to (2R)-annullatin F, which is subsequently acetylated by an acetyltransferase leading to (2R)-annullatin G formation. The remaining enzymes identified within the cluster, anuD, anuI and anuJ, seem not to be involved in annullatin biosynthesis. The chain is Cytochrome P450 monooxygenase anuE from Penicillium roqueforti (strain FM164).